The following is a 1111-amino-acid chain: Cell death abnormality protein 1 (1111 aa).

A signal peptide spans 1 to 18 (MRLILLVLLATWQVVVDT). Over 19–910 (RAPTFPDKLT…NGAGRSTGLT (892 aa)) the chain is Extracellular. The EMI domain occupies 41-113 (GDHVCTVKTI…QCCDGYYQTK (73 aa)). 15 cysteine pairs are disulfide-bonded: Cys45-Cys106, Cys71-Cys80, Cys105-Cys117, Cys121-Cys130, Cys125-Cys136, Cys138-Cys147, Cys160-Cys172, Cys166-Cys179, Cys181-Cys190, Cys203-Cys215, Cys209-Cys221, Cys223-Cys232, Cys245-Cys257, Cys251-Cys264, and Cys266-Cys275. Asn66 carries N-linked (GlcNAc...) asparagine glycosylation. 4 consecutive EGF-like domains span residues 118 to 148 (LPDCNPPCKKGKCIEPGKCECDPGYGGKYCA), 156 to 191 (WGLGCSKSCDCENGANCDPELGTCICTSGFQGERCE), 199 to 233 (WGPNCVKSCPCQNGGKCNKEGKCVCSDGWGGEFCL), and 241 to 276 (FGAECKFECNCQNGATCDNTNGKCICKSGYHGALCE). N-linked (GlcNAc...) asparagine glycans are attached at residues Asn333 and Asn345. An EGF-like 5 domain is found at 421–458 (YGPNCEKQAMCDWNHASECNPETGSCVCKPGRTGKNCS). 3 disulfide bridges follow: Cys425-Cys439, Cys431-Cys446, and Cys448-Cys457. N-linked (GlcNAc...) asparagine glycosylation occurs at Asn456. The FU repeat unit spans residues 629 to 680 (DQKCDPNTFGFLCQETVTPSPCASTDPKNGVCLSCPPGSSGIHCEHNCPAGS). The 36-residue stretch at 681-716 (YGDGCQQVCSCADGHGCDPTTGECICEPGYHGKTCS) folds into the EGF-like 6 domain. Cystine bridges form between Cys685–Cys697, Cys691–Cys704, and Cys706–Cys715. Residues 911 to 931 (WFFVLLIVALCGGLGLIALFY) traverse the membrane as a helical segment. Residues 931–1007 (YRNKYQKEKD…EEELENKKIH (77 aa)) form an interaction with trim-21 region. At 932 to 1111 (RNKYQKEKDP…KKRAQDNLYT (180 aa)) the chain is on the cytoplasmic side. 2 disordered regions span residues 940-993 (DPDM…PNGL) and 1006-1111 (IHGR…NLYT). Positions 962-965 (NPLY) match the NPXY motif. The segment covering 963 to 980 (PLYSRQSVFPDSDAFSSE) has biased composition (polar residues). At Tyr1019 the chain carries Phosphotyrosine; by SRC. The YXXL signature appears at 1019 to 1022 (YASL). Low complexity predominate over residues 1030 to 1039 (SSSSASASAS). The span at 1068–1083 (NSISPAHAVTTSNHNE) shows a compositional bias: polar residues.

As to quaternary structure, interacts (via C-terminus) with ced-6 (via PTB domain). Interacts with nck-1; the interaction is required for ced-1 degradation through the proteasome pathway. Interacts with V-ATPase vha-10. Post-translationally, phosphorylation of Tyr-1019, within the YXXL motif, by src-1 is thought to initiate phagosomal formation. In terms of processing, 'Lys-48'-linked polyubiquitination by trim-21 leads to proteasomal degradation. As to expression, expressed in engulfing cells and syncytium hypodermal cells. Ced-7 is necessary for clustering around cell corpses prior to engulfment.

It is found in the cell membrane. It localises to the cytoplasmic vesicle. Its subcellular location is the phagosome membrane. Its function is as follows. Involved in programmed cell death, also called apoptosis, in both somatic and germ cells. Acts by recruiting ced-6 to phagosomes which enables actin-dependent cytoskeletal reorganization and subsequent engulfment of the apoptotic cell corpse. Has a role in the association of ppk-3 and rab-7 with the phagosomal surface which is necessary for the incorporation of lysosomes to phagosomes during phagosome maturation. Activates the expression of unfolded protein response genes, which are involved in the immune response to live bacteria. The sequence is that of Cell death abnormality protein 1 from Caenorhabditis elegans.